Reading from the N-terminus, the 542-residue chain is Glutamyl-tRNA(Gln) amidotransferase subunit B, mitochondrial (542 aa).

It belongs to the GatB/GatE family. GatB subfamily. As to quaternary structure, subunit of the heterotrimeric GatFAB amidotransferase (AdT) complex, composed of A, B and F subunits.

Its subcellular location is the mitochondrion. The enzyme catalyses L-glutamyl-tRNA(Gln) + L-glutamine + ATP + H2O = L-glutaminyl-tRNA(Gln) + L-glutamate + ADP + phosphate + H(+). Its function is as follows. Allows the formation of correctly charged Gln-tRNA(Gln) through the transamidation of misacylated Glu-tRNA(Gln) in the mitochondria. The reaction takes place in the presence of glutamine and ATP through an activated gamma-phospho-Glu-tRNA(Gln). This Candida glabrata (strain ATCC 2001 / BCRC 20586 / JCM 3761 / NBRC 0622 / NRRL Y-65 / CBS 138) (Yeast) protein is Glutamyl-tRNA(Gln) amidotransferase subunit B, mitochondrial.